We begin with the raw amino-acid sequence, 476 residues long: Stromelysin-2 (476 aa).

The N-terminal stretch at 1–17 (MMHLAFLVLLCLPVCSA) is a signal peptide. Positions 18 to 98 (YPLSGAAKEE…PRCGVPDVGH (81 aa)) are cleaved as a propeptide — activation peptide. The short motif at 89 to 96 (PRCGVPDV) is the Cysteine switch element. Zn(2+)-binding residues include C91, H167, D169, H182, H195, and H217. The active site involves E218. 2 residues coordinate Zn(2+): H221 and H227. 4 Hemopexin repeats span residues 286 to 335 (PAKC…WPSL), 336 to 382 (PSYL…GFPP), 384 to 432 (IRKI…FPGV), and 433 to 476 (EPKV…WLHC). C289 and C476 are disulfide-bonded.

It belongs to the peptidase M10A family. The cofactor is Zn(2+). Ca(2+) serves as cofactor.

The protein localises to the secreted. It is found in the extracellular space. The protein resides in the extracellular matrix. It carries out the reaction Similar to stromelysin 1, but action on collagen types III, IV and V is weak.. In terms of biological role, can degrade fibronectin, gelatins of type I, III, IV, and V; weakly collagens III, IV, and V. Activates procollagenase. The polypeptide is Stromelysin-2 (MMP10) (Homo sapiens (Human)).